We begin with the raw amino-acid sequence, 78 residues long: Defensin-like protein 201 (78 aa).

The first 22 residues, 1–22 (MRNLINFAVLIMTIFIVSASGA), serve as a signal peptide directing secretion. 4 cysteine pairs are disulfide-bonded: C32–C78, C41–C61, C46–C71, and C50–C73.

Belongs to the DEFL family.

Its subcellular location is the secreted. This is Defensin-like protein 201 from Arabidopsis thaliana (Mouse-ear cress).